Reading from the N-terminus, the 342-residue chain is MATH domain and coiled-coil domain-containing protein At3g44800 (342 aa).

In terms of domain architecture, MATH spans 3-129 (YEKFTWVIKN…NNEVKIVAEV (127 aa)). A coiled-coil region spans residues 253–327 (KVDWLERKLE…ALLEKEKGKV (75 aa)).

The protein is MATH domain and coiled-coil domain-containing protein At3g44800 of Arabidopsis thaliana (Mouse-ear cress).